The primary structure comprises 705 residues: Kinesin-like protein KIF2A (705 aa).

A disordered region spans residues 65–185 (DLVPDEDIEP…QQELREKRAQ (121 aa)). A Phosphoserine modification is found at Ser-75. Thr-96 carries the post-translational modification Phosphothreonine. Residue Ser-99 is modified to Phosphoserine. N6-acetyllysine is present on Lys-101. Residues 122–139 (LPEQSSSAQQNGSVSDIS) show a composition bias toward polar residues. A phosphoserine mark is found at Ser-134 and Ser-139. A coiled-coil region spans residues 153-186 (RRKSNCVKEVEKLQEKREKRRLQQQELREKRAQD). A compositionally biased stretch (basic and acidic residues) spans 158-185 (CVKEVEKLQEKREKRRLQQQELREKRAQ). Residues 222–552 (RICVCVRKRP…LRYANRVKEL (331 aa)) form the Kinesin motor domain. 312-319 (GQTGSGKT) serves as a coordination point for ATP. Position 572 is a phosphoserine (Gln-572). Positions 659–698 (ATQLEAILEQKIDILTELRDKVKSFRAALQEEEQASKQIN) form a coiled coil.

The protein belongs to the TRAFAC class myosin-kinesin ATPase superfamily. Kinesin family. MCAK/KIF2 subfamily. As to quaternary structure, interacts with AURKA and PLK1. Interacts with PSRC1. Interacts with MCRS1; the interaction enhances recruitment of KIF2A to the minus ends of spindle microtubules which promotes chromosome alignment.

The protein localises to the cytoplasm. It is found in the cytoskeleton. The protein resides in the microtubule organizing center. Its subcellular location is the centrosome. It localises to the spindle pole. The protein localises to the spindle. Plus end-directed microtubule-dependent motor required for normal brain development. May regulate microtubule dynamics during axonal growth. Required for normal progression through mitosis. Required for normal congress of chromosomes at the metaphase plate. Required for normal spindle dynamics during mitosis. Promotes spindle turnover. Implicated in formation of bipolar mitotic spindles. Has microtubule depolymerization activity. The sequence is that of Kinesin-like protein KIF2A from Rattus norvegicus (Rat).